The sequence spans 1002 residues: Protein SMAX1-LIKE 7 (1002 aa).

The Clp R domain occupies 8–185 (ARQCLTEETA…DVLHPPVTSQ (178 aa)). 2 repeat regions span residues 12 to 86 (LTEE…LDRL) and 103 to 185 (VSNS…VTSQ). The EAR motif lies at 854–858 (LDLNL).

It belongs to the ClpA/ClpB family. Interacts with TPL/TPR in an EAR-motif dependent manner. Interacts with TPL, TPR1, TPR2 and TPR4. Interacts with MAX2 and TPR2. Interacts with D14. The interaction with D14 occurs in the presence of (2'R) stereoisomers of strigolactones, but not (2'S) stereoisomers. In terms of processing, ubiquitinated upon strigolactone treatment. Strigolactone, but not karrikin, triggers rapid SCF(MAX2)-dependent degradation. In terms of tissue distribution, expressed in axillary branches and roots. Detected in seedlings and leaves. Expressed in the primary rosette buds and expanding leaves of adult rosettes, the vasculature of the hypocotyls, cotyledons, and mature roots, and in the midvein and petioles of young leaves.

It localises to the nucleus. In terms of biological role, probable component of a transcriptional corepressor complex involved in branching control. Regulates cotyledon expansion and lateral root growth, but not germination or hypocotyl elongation. Promotes auxin transport and PIN1 accumulation in the stem and represses BRC1/TCP18 expression in axillary buds. The protein is Protein SMAX1-LIKE 7 of Arabidopsis thaliana (Mouse-ear cress).